We begin with the raw amino-acid sequence, 491 residues long: Glutamyl-tRNA(Gln) amidotransferase subunit A (491 aa).

Active-site charge relay system residues include Lys-78 and Ser-158. Catalysis depends on Ser-182, which acts as the Acyl-ester intermediate.

Belongs to the amidase family. GatA subfamily. Heterotrimer of A, B and C subunits.

It carries out the reaction L-glutamyl-tRNA(Gln) + L-glutamine + ATP + H2O = L-glutaminyl-tRNA(Gln) + L-glutamate + ADP + phosphate + H(+). Allows the formation of correctly charged Gln-tRNA(Gln) through the transamidation of misacylated Glu-tRNA(Gln) in organisms which lack glutaminyl-tRNA synthetase. The reaction takes place in the presence of glutamine and ATP through an activated gamma-phospho-Glu-tRNA(Gln). The sequence is that of Glutamyl-tRNA(Gln) amidotransferase subunit A from Afipia carboxidovorans (strain ATCC 49405 / DSM 1227 / KCTC 32145 / OM5) (Oligotropha carboxidovorans).